Reading from the N-terminus, the 316-residue chain is Beta-ketoacyl-[acyl-carrier-protein] synthase III 4 (316 aa).

Residues C114 and H242 contribute to the active site. The tract at residues 243–247 (QANLR) is ACP-binding. N272 is a catalytic residue.

The protein belongs to the thiolase-like superfamily. FabH family. As to quaternary structure, homodimer.

Its subcellular location is the cytoplasm. The enzyme catalyses malonyl-[ACP] + acetyl-CoA + H(+) = 3-oxobutanoyl-[ACP] + CO2 + CoA. Its pathway is lipid metabolism; fatty acid biosynthesis. Its function is as follows. Catalyzes the condensation reaction of fatty acid synthesis by the addition to an acyl acceptor of two carbons from malonyl-ACP. Catalyzes the first condensation reaction which initiates fatty acid synthesis and may therefore play a role in governing the total rate of fatty acid production. Possesses both acetoacetyl-ACP synthase and acetyl transacylase activities. Its substrate specificity determines the biosynthesis of branched-chain and/or straight-chain of fatty acids. This chain is Beta-ketoacyl-[acyl-carrier-protein] synthase III 4, found in Streptomyces coelicolor (strain ATCC BAA-471 / A3(2) / M145).